A 536-amino-acid chain; its full sequence is Copine-1 (536 aa).

C2 domains follow at residues 1–113 (MAHC…TLPL) and 122–244 (GRGT…ECIH). D21, D27, D79, D81, D91, D152, and D158 together coordinate Ca(2+). An N6-acetyllysine modification is found at K170. The Ca(2+) site is built by D213, D215, and D221. Residues 282 to 484 (QINFTVGVDF…AARDIVQFVP (203 aa)) form the VWFA domain.

This sequence belongs to the copine family. Homodimer; homodimerizes via its C2 domains. Interacts with p65/RELA (via N-terminus); this interaction induces proteolytic cleavage of p65/RELA subunit and inhibition of NF-kappa-B transcriptional activity. Interacts (via VWFA domain) with ACTB, CCDC22, MYCBP2, PPP5C, RDX and UBE2O. Ca(2+) serves as cofactor. In terms of tissue distribution, expressed in liver, brain, heart, intestine, kidney and lung (at protein level).

The protein resides in the nucleus. It is found in the cytoplasm. Its subcellular location is the cell membrane. Its function is as follows. Calcium-dependent phospholipid-binding protein that plays a role in calcium-mediated intracellular processes. Involved in the TNF-alpha receptor signaling pathway in a calcium-dependent manner. Exhibits calcium-dependent phospholipid binding properties. Plays a role in neuronal progenitor cell differentiation; induces neurite outgrowth via a AKT-dependent signaling cascade and calcium-independent manner. May recruit target proteins to the cell membrane in a calcium-dependent manner. May function in membrane trafficking. Involved in TNF-alpha-induced NF-kappa-B transcriptional repression by inducing endoprotease processing of the transcription factor NF-kappa-B p65/RELA subunit. Also induces endoprotease processing of NF-kappa-B p50/NFKB1, p52/NFKB2, RELB and REL. This Rattus norvegicus (Rat) protein is Copine-1.